The following is a 570-amino-acid chain: Proline--tRNA ligase (570 aa).

The protein belongs to the class-II aminoacyl-tRNA synthetase family. ProS type 1 subfamily. Homodimer.

The protein resides in the cytoplasm. The enzyme catalyses tRNA(Pro) + L-proline + ATP = L-prolyl-tRNA(Pro) + AMP + diphosphate. Its function is as follows. Catalyzes the attachment of proline to tRNA(Pro) in a two-step reaction: proline is first activated by ATP to form Pro-AMP and then transferred to the acceptor end of tRNA(Pro). As ProRS can inadvertently accommodate and process non-cognate amino acids such as alanine and cysteine, to avoid such errors it has two additional distinct editing activities against alanine. One activity is designated as 'pretransfer' editing and involves the tRNA(Pro)-independent hydrolysis of activated Ala-AMP. The other activity is designated 'posttransfer' editing and involves deacylation of mischarged Ala-tRNA(Pro). The misacylated Cys-tRNA(Pro) is not edited by ProRS. The polypeptide is Proline--tRNA ligase (Shewanella pealeana (strain ATCC 700345 / ANG-SQ1)).